The sequence spans 994 residues: Sarcoplasmic/endoplasmic reticulum calcium ATPase 1 (994 aa).

Residues 1–48 lie on the Cytoplasmic side of the membrane; sequence MENAHAKTAEECLAFFGVNESVGLSGEQVRRALEKYGHNELPAEEGKT. The helical transmembrane segment at 49–69 threads the bilayer; the sequence is IWELVVEQFEDLLVRILLLAA. Topologically, residues 70–89 are lumenal; the sequence is CISFVLAWFEEGEETITAFV. Residues 90–110 traverse the membrane as a helical segment; that stretch reads EPFVILLILIANAVVGVWQER. Over 111–253 the chain is Cytoplasmic; sequence NAENAIEALK…QDKTPLQQKL (143 aa). Residues 254–273 form a helical membrane-spanning segment; the sequence is DEFGEQLSKVISLICVAVWL. Topologically, residues 274-295 are lumenal; that stretch reads INIGHFNDPVHGGSWIRGAIYY. A helical membrane pass occupies residues 296-313; the sequence is FKIAVALAVAAIPEGLPA. Ca(2+) is bound by residues valine 304, alanine 305, isoleucine 307, and glutamate 309. The Cytoplasmic portion of the chain corresponds to 314–757; that stretch reads VITTCLALGT…EEGRAIYNNM (444 aa). Aspartate 351 acts as the 4-aspartylphosphate intermediate in catalysis. Residues aspartate 351 and threonine 353 each contribute to the Mg(2+) site. Threonine 353, glutamate 442, arginine 489, lysine 515, arginine 560, threonine 625, glycine 626, aspartate 627, arginine 678, and lysine 684 together coordinate ATP. Aspartate 703 is a binding site for Mg(2+). Residue asparagine 706 participates in ATP binding. The chain crosses the membrane as a helical span at residues 758 to 777; sequence KQFIRYLISSNVGEVVCIFL. Ca(2+) contacts are provided by asparagine 768 and glutamate 771. Over 778 to 787 the chain is Lumenal; it reads TAALGLPEAL. Residues 788–808 form a helical membrane-spanning segment; that stretch reads IPVQLLWVNLVTDGLPATALG. The interval 788-808 is interaction with PLN; sequence IPVQLLWVNLVTDGLPATALG. Residues asparagine 796, threonine 799, and aspartate 800 each contribute to the Ca(2+) site. Over 809–828 the chain is Cytoplasmic; it reads FNPPDLDIMDKPPRSPKEPL. The helical transmembrane segment at 829–851 threads the bilayer; that stretch reads ISGWLFFRYLAIGGYVGAATVGA. Residues 852–897 are Lumenal-facing; that stretch reads AAWWFLYAEDGPSLTYHQLTHFMQCTHHNAEFEGVDCDIFESPVPM. Cysteine 876 and cysteine 888 are joined by a disulfide. A helical transmembrane segment spans residues 898–917; it reads TMALSVLVTIEMCNALNSLS. Glutamate 908 contacts Ca(2+). The Cytoplasmic segment spans residues 918–930; it reads ENQSLLRMPPWVN. Residues 931–949 form a helical membrane-spanning segment; the sequence is IWLVGSICLSMSLHFVILY. Residues 932 to 943 are interaction with PLN; it reads WLVGSICLSMSL. Residues 950 to 964 are Lumenal-facing; that stretch reads VDPLPMIFKLTHLDL. A helical transmembrane segment spans residues 965–985; it reads AHWLVVLRISFPVILLDEALK. Residues 986–994 are Cytoplasmic-facing; sequence FVARNYLEA.

It belongs to the cation transport ATPase (P-type) (TC 3.A.3) family. Type IIA subfamily. As to quaternary structure, interacts with sarcolipin (SLN). Interacts with phospholamban (PLN). Interacts with myoregulin (MRLN). Interacts with DWORF. The cofactor is Mg(2+).

The protein localises to the endoplasmic reticulum membrane. Its subcellular location is the sarcoplasmic reticulum membrane. The catalysed reaction is Ca(2+)(in) + ATP + H2O = Ca(2+)(out) + ADP + phosphate + H(+). Its activity is regulated as follows. Inhibited by sarcolipin (SLN) and myoregulin (MRLN). Also shown to be inhibited by phospholamban (PLN) in vitro. Enhanced by DWORF; DWORF increases activity by displacing sarcolipin (SLN), phospholamban (PLN) and myoregulin (MRLN). Key regulator of striated muscle performance by acting as the major Ca(2+) ATPase responsible for the reuptake of cytosolic Ca(2+) into the sarcoplasmic reticulum. Catalyzes the hydrolysis of ATP coupled with the translocation of calcium from the cytosol to the sarcoplasmic reticulum lumen. Contributes to calcium sequestration involved in muscular excitation/contraction. This is Sarcoplasmic/endoplasmic reticulum calcium ATPase 1 (ATP2A1) from Gallus gallus (Chicken).